The following is a 427-amino-acid chain: Glutamate-1-semialdehyde 2,1-aminomutase (427 aa).

The residue at position 267 (Lys-267) is an N6-(pyridoxal phosphate)lysine.

This sequence belongs to the class-III pyridoxal-phosphate-dependent aminotransferase family. HemL subfamily. Homodimer. It depends on pyridoxal 5'-phosphate as a cofactor.

The protein localises to the cytoplasm. The catalysed reaction is (S)-4-amino-5-oxopentanoate = 5-aminolevulinate. The protein operates within porphyrin-containing compound metabolism; protoporphyrin-IX biosynthesis; 5-aminolevulinate from L-glutamyl-tRNA(Glu): step 2/2. The chain is Glutamate-1-semialdehyde 2,1-aminomutase from Sulfurihydrogenibium azorense (strain DSM 15241 / OCM 825 / Az-Fu1).